We begin with the raw amino-acid sequence, 203 residues long: Pro-FMRFamide-related neuropeptide VF (203 aa).

A signal peptide spans 1–26; the sequence is MEIISSKRFILLTLATSSFLTSNTLC. The propeptide occupies 27–57; sequence SDELMMPHFHSKEGYGKYYQLRGIPKGVKER. Phenylalanine amide is present on phenylalanine 94. A propeptide spanning residues 97–106 is cleaved from the precursor; sequence NIEDRRSPRA. A Phenylalanine amide modification is found at phenylalanine 125. Positions 128–203 are excised as a propeptide; sequence TTARRITKTL…QPVLQGAMKL (76 aa). The disordered stretch occupies residues 161 to 186; sequence HQEIQSPGQEQPRKRVFTETDDAERK. Positions 171-186 are enriched in basic and acidic residues; that stretch reads QPRKRVFTETDDAERK.

The protein belongs to the FARP (FMRFamide related peptide) family. Isoform 1 is expressed at high levels in the hypothalamus and eye. Isoform 2 is specifically expressed in a region between the dorsomedial hypothalamic and ventromedial hypothalamic nuclei.

The protein resides in the secreted. Its function is as follows. Efficiently inhibits forskolin-induced production of cAMP. Acts as a potent negative regulator of gonadotropin synthesis and secretion. Induces secretion of prolactin. In terms of biological role, efficiently inhibits forskolin-induced production of cAMP. Blocks morphine-induced analgesia. The protein is Pro-FMRFamide-related neuropeptide VF (Npvf) of Rattus norvegicus (Rat).